Here is a 392-residue protein sequence, read N- to C-terminus: MEEQQPEPKSQRDSALGAAAAATPGGLSLSLSPGASGSSGSGSDGDSVPVSPQPAPPSPPAAPCLPPLAHHPHLPPHPPPPPPQHLAAPAHQPQPAAQLHRTTNFFIDNILRPDFGCKKEQPPPQLLVAAAARGGAGGGGRVERDRGQTAAGRDPVHPLGTRAPGAASLLCAPDANCGPPDGSQPAAAGAGASKAGNPAAAAAAAAAAVAAAAAAAAAKPSDTGGGGSGGGAGSPGAQGTKYPEHGNPAILLMGSANGGPVVKTDSQQPLVWPAWVYCTRYSDRPSSGPRTRKLKKKKNEKEDKRPRTAFTAEQLQRLKAEFQANRYITEQRRQTLAQELSLNESQIKIWFQNKRAKIKKATGIKNGLALHLMAQGLYNHSTTTVQDKDESE.

Disordered stretches follow at residues 1 to 100, 132 to 164, 219 to 251, and 282 to 306; these read MEEQ…AQLH, ARGG…TRAP, KPSD…PAIL, and SDRP…DKRP. The segment covering 14–36 has biased composition (low complexity); the sequence is SALGAAAAATPGGLSLSLSPGAS. Composition is skewed to pro residues over residues 51 to 66 and 75 to 84; these read SPQP…PCLP and PPHPPPPPPQ. Positions 85–100 are enriched in low complexity; it reads HLAAPAHQPQPAAQLH. The span at 223–236 shows a compositional bias: gly residues; sequence TGGGGSGGGAGSPG. A DNA-binding region (homeobox) is located at residues 303-362; that stretch reads DKRPRTAFTAEQLQRLKAEFQANRYITEQRRQTLAQELSLNESQIKIWFQNKRAKIKKAT.

Belongs to the engrailed homeobox family.

The protein localises to the nucleus. Required for proper formation of the apical ectodermal ridge and correct dorsal-ventral patterning in the limb. This is Homeobox protein engrailed-1 (EN1) from Homo sapiens (Human).